Reading from the N-terminus, the 376-residue chain is MTEISAKKVKVSALCELCHARKAVMKRPKNLQKLCKDCFYKVFETEIHNTIVDAKLFSPGDKVAIGASGGKDSTVLASVLKTLNERYDYGLILVLLSIDEGIKGYRDDSLATVKRNQVQYEMPLEIISYRDLYNWTMDEIVSCAGIRSSCTYCGVLRRQALDRGAAKLGINHVVTGHNADDMAETVLMNLLRGDTARLEKSCAIITQSAGSPIKRSKPFKYTYQKEIVLYAHYKKLDYFSTECTYAPEAFRGTARELLKSLESIRPSCIMDIIYSGEHLVLAPKKKKITTSYKTNKKKTHTENEVNADGSVSLGRKKQFEDGNRCEKCGYLSSNRICKACMLLAGLEMNRAKVSIDNNTAVDGAAVLTRTLEQLSF.

The protein belongs to the TtcA family. CTU1/NCS6/ATPBD3 subfamily.

The protein localises to the cytoplasm. It functions in the pathway tRNA modification; 5-methoxycarbonylmethyl-2-thiouridine-tRNA biosynthesis. Its function is as follows. Plays a central role in 2-thiolation of mcm(5)S(2)U at tRNA wobble positions of tRNA(Lys), tRNA(Glu) and tRNA(Gln). Directly binds tRNAs and probably acts by catalyzing adenylation of tRNAs, an intermediate required for 2-thiolation. It is unclear whether it acts as a sulfurtransferase that transfers sulfur from thiocarboxylated URM1 onto the uridine of tRNAs at wobble position. Prior mcm(5) tRNA modification by the elongator complex is required for 2-thiolation. May also be involved in protein urmylation. In Scheffersomyces stipitis (strain ATCC 58785 / CBS 6054 / NBRC 10063 / NRRL Y-11545) (Yeast), this protein is Cytoplasmic tRNA 2-thiolation protein 1.